A 485-amino-acid polypeptide reads, in one-letter code: Cobyric acid synthase (485 aa).

The region spanning 248-435 is the GATase cobBQ-type domain; it reads RLKVAVAVPP…LHGLFESPAA (188 aa). The active-site Nucleophile is Cys329. His427 is a catalytic residue.

It belongs to the CobB/CobQ family. CobQ subfamily.

It functions in the pathway cofactor biosynthesis; adenosylcobalamin biosynthesis. In terms of biological role, catalyzes amidations at positions B, D, E, and G on adenosylcobyrinic A,C-diamide. NH(2) groups are provided by glutamine, and one molecule of ATP is hydrogenolyzed for each amidation. The chain is Cobyric acid synthase from Azotobacter vinelandii (strain DJ / ATCC BAA-1303).